A 579-amino-acid polypeptide reads, in one-letter code: Arginine--tRNA ligase (579 aa).

Positions 127–137 (PNLAKEMHVGH) match the 'HIGH' region motif.

The protein belongs to the class-I aminoacyl-tRNA synthetase family. Monomer.

The protein resides in the cytoplasm. It catalyses the reaction tRNA(Arg) + L-arginine + ATP = L-arginyl-tRNA(Arg) + AMP + diphosphate. The protein is Arginine--tRNA ligase of Stutzerimonas stutzeri (strain A1501) (Pseudomonas stutzeri).